Reading from the N-terminus, the 348-residue chain is GTPase Obg (348 aa).

Positions 1–159 (MKFLDQAKIY…KTIILRLKLI (159 aa)) constitute an Obg domain. The region spanning 160-327 (ADAGLVGLPN…VLRLAADEIW (168 aa)) is the OBG-type G domain. GTP contacts are provided by residues 166 to 173 (GLPNAGKS), 191 to 195 (FTTLT), 212 to 215 (DIPG), 279 to 282 (NKMD), and 308 to 310 (SGV). Positions 173 and 193 each coordinate Mg(2+).

This sequence belongs to the TRAFAC class OBG-HflX-like GTPase superfamily. OBG GTPase family. Monomer. The cofactor is Mg(2+).

The protein localises to the cytoplasm. Functionally, an essential GTPase which binds GTP, GDP and possibly (p)ppGpp with moderate affinity, with high nucleotide exchange rates and a fairly low GTP hydrolysis rate. Plays a role in control of the cell cycle, stress response, ribosome biogenesis and in those bacteria that undergo differentiation, in morphogenesis control. This Parvibaculum lavamentivorans (strain DS-1 / DSM 13023 / NCIMB 13966) protein is GTPase Obg.